Here is a 102-residue protein sequence, read N- to C-terminus: Large ribosomal subunit protein bL28 (102 aa).

The disordered stretch occupies residues 1-20 (MSRRCELTAKGPQVGHKVSH).

The protein belongs to the bacterial ribosomal protein bL28 family.

In Bradyrhizobium sp. (strain BTAi1 / ATCC BAA-1182), this protein is Large ribosomal subunit protein bL28.